The sequence spans 284 residues: MKNNFSKYQGLGNDFIIFDARSNNLDHLFSKNKDNFIEHLCNRNFGIGADGIILILESNNKCFVRMKIYNSDGSEPEMCGNGIRCLIAFLNDNNEINELSEIPIETKAGLILTSIDCNENIKVNMGEPILSPLDIPTKLLMNSLKVPNGVITLKDQILNVYAASMGNPHMIVFVNDIEGIPFQEWGSFLEKHNTFPNDTNVHFVEIIDKSNIKVKVWERGCGPTLACGTGACACLVVTSKLGKTLNNANVYLPGGKLEVEWPNQSGPVFMQGPALKVFSGEIDI.

2 residues coordinate substrate: asparagine 13 and asparagine 70. Cysteine 79 (proton donor) is an active-site residue. Residues 80 to 81, asparagine 167, asparagine 200, and 218 to 219 contribute to the substrate site; these read GN and ER. The active-site Proton acceptor is cysteine 227. 228 to 229 is a substrate binding site; sequence GT.

It belongs to the diaminopimelate epimerase family. As to quaternary structure, homodimer.

It localises to the cytoplasm. The catalysed reaction is (2S,6S)-2,6-diaminopimelate = meso-2,6-diaminopimelate. It participates in amino-acid biosynthesis; L-lysine biosynthesis via DAP pathway; DL-2,6-diaminopimelate from LL-2,6-diaminopimelate: step 1/1. Functionally, catalyzes the stereoinversion of LL-2,6-diaminopimelate (L,L-DAP) to meso-diaminopimelate (meso-DAP), a precursor of L-lysine and an essential component of the bacterial peptidoglycan. The polypeptide is Diaminopimelate epimerase (Prochlorococcus marinus (strain NATL1A)).